A 217-amino-acid polypeptide reads, in one-letter code: Oxygen regulatory protein NreC (217 aa).

The Response regulatory domain occupies 2–119; it reads KIVIADDHAV…QLLLAVRTVY (118 aa). Position 53 is a 4-aspartylphosphate (Asp-53). The 66-residue stretch at 148-213 folds into the HTH luxR-type domain; it reads TNDPFKILSK…ELVEYALKKK (66 aa). Residues 172–191 constitute a DNA-binding region (H-T-H motif); sequence NKDIAEKLFVSVKTVEAHKT.

Phosphorylated by NreB.

It localises to the cytoplasm. Member of the two-component regulatory system NreB/NreC involved in the control of dissimilatory nitrate/nitrite reduction in response to oxygen. Phosphorylated NreC binds to a GC-rich palindromic sequence at the promoters of the nitrate (narGHJI) and nitrite (nir) reductase operons, as well as the putative nitrate transporter gene narT, and activates their expression. The sequence is that of Oxygen regulatory protein NreC (nreC) from Staphylococcus haemolyticus (strain JCSC1435).